The primary structure comprises 145 residues: Ribosome-binding factor A (145 aa).

Positions 1–10 (MKRPSSHGRR) are enriched in basic residues. 2 disordered regions span residues 1–21 (MKRP…RQLR) and 124–145 (DDPK…KDED).

Belongs to the RbfA family. Monomer. Binds 30S ribosomal subunits, but not 50S ribosomal subunits or 70S ribosomes.

The protein localises to the cytoplasm. Functionally, one of several proteins that assist in the late maturation steps of the functional core of the 30S ribosomal subunit. Associates with free 30S ribosomal subunits (but not with 30S subunits that are part of 70S ribosomes or polysomes). Required for efficient processing of 16S rRNA. May interact with the 5'-terminal helix region of 16S rRNA. The chain is Ribosome-binding factor A from Phenylobacterium zucineum (strain HLK1).